Reading from the N-terminus, the 505-residue chain is Deoxyguanosinetriphosphate triphosphohydrolase (505 aa).

The 208-residue stretch at 66 to 273 (RLTHSLEVQQ…MEAADDISYC (208 aa)) folds into the HD domain.

The protein belongs to the dGTPase family. Type 1 subfamily. As to quaternary structure, homotetramer. Mg(2+) is required as a cofactor.

The enzyme catalyses dGTP + H2O = 2'-deoxyguanosine + triphosphate + H(+). Its function is as follows. dGTPase preferentially hydrolyzes dGTP over the other canonical NTPs. The sequence is that of Deoxyguanosinetriphosphate triphosphohydrolase from Escherichia fergusonii (strain ATCC 35469 / DSM 13698 / CCUG 18766 / IAM 14443 / JCM 21226 / LMG 7866 / NBRC 102419 / NCTC 12128 / CDC 0568-73).